The chain runs to 202 residues: MSENAGTPKKQGRNNGAVVMMCLSFVFGMGAMSYAAVPLYRIFCQVTGYNGTTQRVDQVSSVVLDRTMRVTFDANVAPGLQWDFKPVEREVNPKIGETIQVNFTAENRSNETQRGQAVFNVTPGEAGVYFNKVQCFCFTETDLKPGEKLDMPVVFYIDPEIVKAVESKNIHTVTLSYTFYPKEGPKPVASNEGGAEKIEKKL.

At 1-14 (MSENAGTPKKQGRN) the chain is on the cytoplasmic side. Residues 15–37 (NGAVVMMCLSFVFGMGAMSYAAV) form a helical; Signal-anchor for type II membrane protein membrane-spanning segment. Over 38–202 (PLYRIFCQVT…GGAEKIEKKL (165 aa)) the chain is Periplasmic.

This sequence belongs to the COX11/CtaG family.

It is found in the cell inner membrane. Functionally, exerts its effect at some terminal stage of cytochrome c oxidase synthesis, probably by being involved in the insertion of the copper B into subunit I. The polypeptide is Cytochrome c oxidase assembly protein CtaG (Rhizobium johnstonii (strain DSM 114642 / LMG 32736 / 3841) (Rhizobium leguminosarum bv. viciae)).